The primary structure comprises 163 residues: Large ribosomal subunit protein uL11 (163 aa).

The interval 1 to 26 is disordered; sequence MAETIEVLVAGGQADPGPPLGPELGP.

Belongs to the universal ribosomal protein uL11 family. Part of the ribosomal stalk of the 50S ribosomal subunit. Interacts with L10 and the large rRNA to form the base of the stalk. L10 forms an elongated spine to which L12 dimers bind in a sequential fashion forming a multimeric L10(L12)X complex.

Forms part of the ribosomal stalk which helps the ribosome interact with GTP-bound translation factors. The polypeptide is Large ribosomal subunit protein uL11 (Halobacterium salinarum (strain ATCC 29341 / DSM 671 / R1)).